The sequence spans 1252 residues: DNA-directed RNA polymerase subunit beta (1252 aa).

The protein belongs to the RNA polymerase beta chain family. In terms of assembly, the RNAP catalytic core consists of 2 alpha, 1 beta, 1 beta' and 1 omega subunit. When a sigma factor is associated with the core the holoenzyme is formed, which can initiate transcription.

The catalysed reaction is RNA(n) + a ribonucleoside 5'-triphosphate = RNA(n+1) + diphosphate. Functionally, DNA-dependent RNA polymerase catalyzes the transcription of DNA into RNA using the four ribonucleoside triphosphates as substrates. The polypeptide is DNA-directed RNA polymerase subunit beta (Chlamydia trachomatis serovar D (strain ATCC VR-885 / DSM 19411 / UW-3/Cx)).